A 205-amino-acid polypeptide reads, in one-letter code: Outer-membrane lipoprotein LolB (205 aa).

An N-terminal signal peptide occupies residues methionine 1–glycine 17. A lipid anchor (N-palmitoyl cysteine) is attached at cysteine 18. Cysteine 18 carries the S-diacylglycerol cysteine lipid modification.

Belongs to the LolB family. In terms of assembly, monomer.

It localises to the cell outer membrane. Plays a critical role in the incorporation of lipoproteins in the outer membrane after they are released by the LolA protein. The polypeptide is Outer-membrane lipoprotein LolB (Pseudomonas fluorescens (strain Pf0-1)).